Here is a 423-residue protein sequence, read N- to C-terminus: Galactosylceramide sulfotransferase (423 aa).

The Cytoplasmic portion of the chain corresponds to 1 to 12; that stretch reads MTLLPKKPCKSK. Residues 13–35 traverse the membrane as a helical; Signal-anchor for type II membrane protein segment; it reads AKGLLLGALFTSFLLLLYSYVVP. Over 36 to 423 the chain is Lumenal; it reads PLYPNMAFTT…WKFLRDFLRW (388 aa). Asn66 and Asn312 each carry an N-linked (GlcNAc...) asparagine glycan.

This sequence belongs to the galactose-3-O-sulfotransferase family. Expressed in brain, testis, kidney, stomach, small intestine, liver, and lung. Not detected in heart, skeletal muscle, and spleen.

Its subcellular location is the golgi apparatus membrane. The enzyme catalyses a beta-D-galactosyl-(1&lt;-&gt;1')-N-acylsphing-4-enine + 3'-phosphoadenylyl sulfate = an N-acyl-1-beta-D-(3-O-sulfo)-galactosyl-sphing-4-enine + adenosine 3',5'-bisphosphate + H(+). It carries out the reaction a 1-O-alkyl-2-acyl-3-O-(beta-D-galactosyl)-sn-glycerol + 3'-phosphoadenylyl sulfate = a 1-O-alkyl-2-acyl-3-(beta-D-3-sulfogalactosyl)-sn-glycerol + adenosine 3',5'-bisphosphate + H(+). The catalysed reaction is a beta-D-Gal-(1&lt;-&gt;1')-ceramide + 3'-phosphoadenylyl sulfate = 1-(3-O-sulfo-beta-D-galactosyl)-ceramide + adenosine 3',5'-bisphosphate + H(+). It catalyses the reaction a 1,2-diacyl-3-O-(beta-D-galactosyl)-sn-glycerol + 3'-phosphoadenylyl sulfate = 1,2-diacyl-3-(3-O-sulfo-beta-D-galactosyl)-sn-glycerol + adenosine 3',5'-bisphosphate + H(+). The enzyme catalyses a beta-D-Gal-(1-&gt;4)-beta-D-Glc-(1&lt;-&gt;1)-Cer(d18:1(4E)) + 3'-phosphoadenylyl sulfate = beta-D-3-sulfogalactosyl-(1-&gt;4)-beta-D-glucosyl-(1&lt;-&gt;1')-N-acylsphing-4-enine + adenosine 3',5'-bisphosphate + H(+). Its pathway is lipid metabolism; sphingolipid metabolism. In terms of biological role, catalyzes the transfer of a sulfate group to position 3 of non-reducing beta-galactosyl residues in glycerolipids and sphingolipids, therefore participates in the biosynthesis of sulfoglycolipids. Catalyzes the synthesis of galactosylceramide sulfate (sulfatide), a major lipid component of the myelin sheath and of monogalactosylalkylacylglycerol sulfate (seminolipid), present in spermatocytes. Seems to prefer beta-glycosides at the non-reducing termini of sugar chains attached to a lipid moiety. Also acts on lactosylceramide, galactosyl 1-alkyl-2-sn-glycerol and galactosyl diacylglycerol (in vitro). The protein is Galactosylceramide sulfotransferase of Mus musculus (Mouse).